Consider the following 218-residue polypeptide: 7-cyano-7-deazaguanine synthase 1 (218 aa).

9–19 (YSGGMDSFTVL) contacts ATP. Zn(2+) is bound by residues cysteine 185, cysteine 193, cysteine 196, and cysteine 199.

The protein belongs to the QueC family. Requires Zn(2+) as cofactor.

The catalysed reaction is 7-carboxy-7-deazaguanine + NH4(+) + ATP = 7-cyano-7-deazaguanine + ADP + phosphate + H2O + H(+). The protein operates within purine metabolism; 7-cyano-7-deazaguanine biosynthesis. Its function is as follows. Catalyzes the ATP-dependent conversion of 7-carboxy-7-deazaguanine (CDG) to 7-cyano-7-deazaguanine (preQ(0)). In Colwellia psychrerythraea (strain 34H / ATCC BAA-681) (Vibrio psychroerythus), this protein is 7-cyano-7-deazaguanine synthase 1.